Consider the following 406-residue polypeptide: Argininosuccinate synthase (406 aa).

Residues 13 to 21 (AYSGGLDTS) and Ala40 contribute to the ATP site. Tyr91 and Ser96 together coordinate L-citrulline. Gly121 is a binding site for ATP. 3 residues coordinate L-aspartate: Thr123, Asn127, and Asp128. Asn127 serves as a coordination point for L-citrulline. Residues Arg131, Ser182, Ser191, Glu267, and Tyr279 each coordinate L-citrulline.

The protein belongs to the argininosuccinate synthase family. Type 1 subfamily. As to quaternary structure, homotetramer.

It localises to the cytoplasm. The enzyme catalyses L-citrulline + L-aspartate + ATP = 2-(N(omega)-L-arginino)succinate + AMP + diphosphate + H(+). The protein operates within amino-acid biosynthesis; L-arginine biosynthesis; L-arginine from L-ornithine and carbamoyl phosphate: step 2/3. The polypeptide is Argininosuccinate synthase (Brucella abortus (strain S19)).